Reading from the N-terminus, the 823-residue chain is Sphingomyelin phosphodiesterase 4 (823 aa).

Phosphoserine occurs at positions 130 and 245. Threonine 665 is subject to Phosphothreonine. Position 749 is a phosphoserine (serine 749). A helical transmembrane segment spans residues 776-796 (LLLLLMAFFVASLFCIGPLSC).

It depends on Mg(2+) as a cofactor. As to expression, expressed in skeletal muscle (at protein level). In terms of tissue distribution, expressed in skeletal muscle but a lower levels than isoform 1 (at protein level).

It is found in the endoplasmic reticulum membrane. The protein localises to the golgi apparatus membrane. It localises to the nucleus envelope. The protein resides in the cell membrane. Its subcellular location is the sarcolemma. The enzyme catalyses a sphingomyelin + H2O = phosphocholine + an N-acylsphing-4-enine + H(+). With respect to regulation, activated by phosphatidylserine and tumor necrosis factor (TNF). Inhibited by scyphostatin. Catalyzes the hydrolysis of membrane sphingomyelin to form phosphorylcholine and ceramide. It has a relevant role in the homeostasis of membrane sphingolipids, thereby influencing membrane integrity, and endoplasmic reticulum organization and function. May sensitize cells to DNA damage-induced apoptosis. In skeletal muscle, mediates TNF-stimulated oxidant production. The sequence is that of Sphingomyelin phosphodiesterase 4 (Smpd4) from Mus musculus (Mouse).